The sequence spans 493 residues: uncharacterized protein (493 aa).

The residue at position 328 (Ser328) is a Phosphoserine. Positions 466 to 486 (AESNSGRGQNSKTKTTSVNLS) are enriched in polar residues. A disordered region spans residues 466–493 (AESNSGRGQNSKTKTTSVNLSRNKRTRT).

This is an uncharacterized protein from Schizosaccharomyces pombe (strain 972 / ATCC 24843) (Fission yeast).